We begin with the raw amino-acid sequence, 488 residues long: Probable malate:quinone oxidoreductase (488 aa).

This sequence belongs to the MQO family. It depends on FAD as a cofactor.

The catalysed reaction is (S)-malate + a quinone = a quinol + oxaloacetate. The protein operates within carbohydrate metabolism; tricarboxylic acid cycle; oxaloacetate from (S)-malate (quinone route): step 1/1. This Neisseria meningitidis serogroup B (strain ATCC BAA-335 / MC58) protein is Probable malate:quinone oxidoreductase.